The chain runs to 298 residues: Probable alpha-L-glutamate ligase (298 aa).

In terms of domain architecture, ATP-grasp spans 104–287; it reads MQLLSRHGIG…VAGKIIEFLE (184 aa). Residues Lys-141, 178-179, Asp-187, and 211-213 each bind ATP; these read EY and RSN. Mg(2+) is bound by residues Asp-248, Glu-260, and Asn-262. Mn(2+) is bound by residues Asp-248, Glu-260, and Asn-262.

The protein belongs to the RimK family. Mg(2+) is required as a cofactor. It depends on Mn(2+) as a cofactor.

The sequence is that of Probable alpha-L-glutamate ligase from Aeromonas salmonicida (strain A449).